Here is a 110-residue protein sequence, read N- to C-terminus: NADH-quinone oxidoreductase subunit K (110 aa).

3 helical membrane passes run 13 to 33 (LNHY…GLFM), 41 to 61 (ILMS…AFSV), and 73 to 93 (IIIL…LLIY).

This sequence belongs to the complex I subunit 4L family. In terms of assembly, NDH-1 is composed of 14 different subunits. Subunits NuoA, H, J, K, L, M, N constitute the membrane sector of the complex.

The protein localises to the cell inner membrane. The enzyme catalyses a quinone + NADH + 5 H(+)(in) = a quinol + NAD(+) + 4 H(+)(out). NDH-1 shuttles electrons from NADH, via FMN and iron-sulfur (Fe-S) centers, to quinones in the respiratory chain. The immediate electron acceptor for the enzyme in this species is believed to be ubiquinone. Couples the redox reaction to proton translocation (for every two electrons transferred, four hydrogen ions are translocated across the cytoplasmic membrane), and thus conserves the redox energy in a proton gradient. The chain is NADH-quinone oxidoreductase subunit K from Rickettsia prowazekii (strain Madrid E).